Reading from the N-terminus, the 213-residue chain is tRNA (guanine-N(7)-)-methyltransferase (213 aa).

Residues Glu44, Asp69, Asp96, and Asp118 each coordinate S-adenosyl-L-methionine. Asp118 is a catalytic residue. Lys122 serves as a coordination point for substrate. Residues 124–129 are interaction with RNA; sequence RHEKRR. Residues Asp154 and 191-194 contribute to the substrate site; that span reads TEYE.

It belongs to the class I-like SAM-binding methyltransferase superfamily. TrmB family.

It carries out the reaction guanosine(46) in tRNA + S-adenosyl-L-methionine = N(7)-methylguanosine(46) in tRNA + S-adenosyl-L-homocysteine. Its pathway is tRNA modification; N(7)-methylguanine-tRNA biosynthesis. In terms of biological role, catalyzes the formation of N(7)-methylguanine at position 46 (m7G46) in tRNA. The chain is tRNA (guanine-N(7)-)-methyltransferase from Streptococcus thermophilus (strain CNRZ 1066).